The sequence spans 244 residues: NAD(P)H-quinone oxidoreductase subunit K (244 aa).

[4Fe-4S] cluster-binding residues include C60, C61, C125, and C156. Residues 213 to 244 are disordered; the sequence is KSEKSIESSKLNPVEESSENIYETNSIDEVIK. Residues 231-244 are compositionally biased toward polar residues; that stretch reads ENIYETNSIDEVIK.

The protein belongs to the complex I 20 kDa subunit family. NDH-1 can be composed of about 15 different subunits; different subcomplexes with different compositions have been identified which probably have different functions. It depends on [4Fe-4S] cluster as a cofactor.

Its subcellular location is the cellular thylakoid membrane. It catalyses the reaction a plastoquinone + NADH + (n+1) H(+)(in) = a plastoquinol + NAD(+) + n H(+)(out). The catalysed reaction is a plastoquinone + NADPH + (n+1) H(+)(in) = a plastoquinol + NADP(+) + n H(+)(out). NDH-1 shuttles electrons from an unknown electron donor, via FMN and iron-sulfur (Fe-S) centers, to quinones in the respiratory and/or the photosynthetic chain. The immediate electron acceptor for the enzyme in this species is believed to be plastoquinone. Couples the redox reaction to proton translocation, and thus conserves the redox energy in a proton gradient. Cyanobacterial NDH-1 also plays a role in inorganic carbon-concentration. This chain is NAD(P)H-quinone oxidoreductase subunit K, found in Prochlorococcus marinus subsp. pastoris (strain CCMP1986 / NIES-2087 / MED4).